The primary structure comprises 601 residues: MSFALKTIYSPSPATTRGKPVVLGGDPKGNNFLYTCGNAVIIRNIKNPNQADIYYEHAQPATVAKYAPSGFYIASGDLSGTLRIWDTTQLEHPLKIELKVLSGPIADIAWSADSQRLVVVGDGKERFGAAILWDSGASVGEITGHSKAIASCDFKATRPFRVITGAEDFQANWFEGPPFKFKHAFKEHTRFLTCVRFSPDGEKVLTVGLDKKGFILDGKTGEKVGALAGGADAHALGIYSCSWSPDSKKVLTVSADKSAKIWDDKGTLLTTFAFEGGVESQLLGSLWQGDTLLAVNLNGDIFSLDQNNPKTPARTLKGHNKLVTSLAFDTASKALYSGSYDGVILQWNLETGIAVPIAGTGHTSSVTQAVVQGNKLVSVSVDDTTRFTPLNPPQYAAQGAKLDSQPQSVAVAQGKDIAVVVTLNSVVVLQGEKVASTTAVKYQPTVVRVSVDGSEVAVGAKDNSIHIYSLSGTTLSEQAVLSGHRGFLTAIAYSPDGKHFASADQNRDIFVWDKASRKIKVEGWVYHNARVTSLAWNSNSNNIVTGSLDSHVYVWSVSEPSKHIAIKNAHRGGVNAVLWVDEHTVASAGLDCSIKTWTIKN.

WD repeat units lie at residues 56-95, 100-143, 145-184, 187-226, 233-272, 318-357, 435-478, 483-522, 526-565, and 569-600; these read EHAQPATVAKYAPSGFYIASGDLSGTLRIWDTTQLEHPLK, VLSG…GEIT, HSKAIASCDFKATRPFRVITGAEDFQANWFEGPPFKFKHA, EHTRFLTCVRFSPDGEKVLTVGLDKKGFILDGKTGEKVGA, AHALGIYSCSWSPDSKKVLTVSADKSAKIWDDKGTLLTTF, GHNKLVTSLAFDTASKALYSGSYDGVILQWNLETGIAVPI, ASTT…LSEQ, GHRGFLTAIAYSPDGKHFASADQNRDIFVWDKASRKIKVE, YHNARVTSLAWNSNSNNIVTGSLDSHVYVWSVSEPSKHIA, and AHRGGVNAVLWVDEHTVASAGLDCSIKTWTIK.

The protein belongs to the WD repeat AIP1 family.

Associated with the process of cyst formation. In Physarum polycephalum (Slime mold), this protein is 66 kDa stress protein.